The following is an 849-amino-acid chain: DNA mismatch repair protein MutS (849 aa).

Position 602-609 (602-609) interacts with ATP; sequence GPNMSGKS.

The protein belongs to the DNA mismatch repair MutS family.

This protein is involved in the repair of mismatches in DNA. It is possible that it carries out the mismatch recognition step. This protein has a weak ATPase activity. The protein is DNA mismatch repair protein MutS of Streptococcus sanguinis (strain SK36).